A 298-amino-acid polypeptide reads, in one-letter code: MDINKARKAKFDELNSGKNLEISRAIEALGDLECACEFSDTINIKFQNLSAEKKEEIYALAKSLKPWRKGPFKIDDIFIDTEWQSFIKFNLLAPHLNLDGKSVADVGCNNGYYMFRMLNFAPKKITGFDPSVHTALQFKFINHFAKTNIAYEMLGVEHLPFFESKFDTIFCLGVIYHRSDPIKMLKELKSALNPGGEVFLDTMYIDMRGEFALSPKNTYSKIPNIYFVPTIDALQGWCERAKFKDFEILATKQTDTSEQRKTPWIDGQSLQNFLDPNDNTKTIEGYPAPKRVYVKIKI.

Carboxy-S-adenosyl-L-methionine is bound by residues Lys-69, Trp-83, Lys-88, Gly-107, 129–131 (DPS), 156–157 (VE), Tyr-176, and Arg-291.

The protein belongs to the class I-like SAM-binding methyltransferase superfamily. CmoB family. In terms of assembly, homotetramer.

It carries out the reaction carboxy-S-adenosyl-L-methionine + 5-hydroxyuridine(34) in tRNA = 5-carboxymethoxyuridine(34) in tRNA + S-adenosyl-L-homocysteine + H(+). Its function is as follows. Catalyzes carboxymethyl transfer from carboxy-S-adenosyl-L-methionine (Cx-SAM) to 5-hydroxyuridine (ho5U) to form 5-carboxymethoxyuridine (cmo5U) at position 34 in tRNAs. The sequence is that of tRNA U34 carboxymethyltransferase from Campylobacter curvus (strain 525.92).